The sequence spans 119 residues: MVKWAVSILVNALLLIVIDGYIDSIHISSIGAAIIASLILSILNVLIKPLLIIFTLPVTMVTLGLFLFVINAITLMMTASIMGDSFQIDGFGTAIWASVILSVFHLLIQKGILEPLRKK.

A signal peptide spans Met-1–Asp-23. Transmembrane regions (helical) follow at residues Ile-27–Ile-47, Leu-50–Ile-70, and Ile-88–Ile-108.

The protein localises to the cell membrane. This is an uncharacterized protein from Bacillus subtilis (strain 168).